Reading from the N-terminus, the 218-residue chain is Hypoxanthine-guanine phosphoribosyltransferase (218 aa).

Ala2 carries the N-acetylalanine modification. GMP is bound at residue Lys69. An N6-acetyllysine modification is found at Lys103. A Glycyl lysine isopeptide (Lys-Gly) (interchain with G-Cter in SUMO1); alternate cross-link involves residue Lys115. Lys115 is covalently cross-linked (Glycyl lysine isopeptide (Lys-Gly) (interchain with G-Cter in SUMO2); alternate). Residues Glu134–Thr142, Lys166, Lys186–Val188, and Asp194 each bind GMP. Asp138 functions as the Proton acceptor in the catalytic mechanism. Position 142 is a phosphothreonine (Thr142). Asp194 lines the Mg(2+) pocket.

It belongs to the purine/pyrimidine phosphoribosyltransferase family. As to quaternary structure, homotetramer. It depends on Mg(2+) as a cofactor.

It is found in the cytoplasm. It carries out the reaction IMP + diphosphate = hypoxanthine + 5-phospho-alpha-D-ribose 1-diphosphate. The catalysed reaction is GMP + diphosphate = guanine + 5-phospho-alpha-D-ribose 1-diphosphate. It functions in the pathway purine metabolism; IMP biosynthesis via salvage pathway; IMP from hypoxanthine: step 1/1. In terms of biological role, converts guanine to guanosine monophosphate, and hypoxanthine to inosine monophosphate. Transfers the 5-phosphoribosyl group from 5-phosphoribosylpyrophosphate onto the purine. Plays a central role in the generation of purine nucleotides through the purine salvage pathway. In Pan troglodytes (Chimpanzee), this protein is Hypoxanthine-guanine phosphoribosyltransferase (HPRT1).